We begin with the raw amino-acid sequence, 51 residues long: UPF0181 protein VV2_0310 (51 aa).

Belongs to the UPF0181 family.

The polypeptide is UPF0181 protein VV2_0310 (Vibrio vulnificus (strain CMCP6)).